A 229-amino-acid chain; its full sequence is Clathrin light chain B (229 aa).

2 stretches are compositionally biased toward low complexity: residues 1 to 17 and 45 to 58; these read MAED…GAPE and GAPA…AQPG. The tract at residues 1 to 70 is disordered; that stretch reads MAEDFGFFSS…SGAGSEDMST (70 aa). 2 positions are modified to phosphoserine: Ser-11 and Ser-13. The interval 93 to 155 is involved in binding clathrin heavy chain; that stretch reads ADRLTQEPES…QVEKNKINNR (63 aa). Thr-187 carries the phosphothreonine modification. A disulfide bond links Cys-199 and Cys-209. Lys-204 is subject to N6-acetyllysine. At Ser-217 the chain carries Phosphoserine.

This sequence belongs to the clathrin light chain family. In terms of assembly, clathrin coats are formed from molecules containing 3 heavy chains and 3 light chains. Interacts (via N-terminus) with HIP1. Interacts with HIP1R.

Its subcellular location is the cytoplasmic vesicle membrane. It localises to the membrane. It is found in the coated pit. Its function is as follows. Clathrin is the major protein of the polyhedral coat of coated pits and vesicles. This Mus musculus (Mouse) protein is Clathrin light chain B (Cltb).